Here is an 82-residue protein sequence, read N- to C-terminus: Sec-independent protein translocase protein TatA (82 aa).

Residues 1 to 21 (MGSFSIWHWLIVLLVVVMIFG) form a helical membrane-spanning segment. Residues 39-82 (FKDGMKDGSTTDAPAASSAPAAQVTGQPANSDKSTIDVEARQKS) are disordered. The span at 51–60 (APAASSAPAA) shows a compositional bias: low complexity. Polar residues predominate over residues 62 to 71 (VTGQPANSDK). Basic and acidic residues predominate over residues 72–82 (STIDVEARQKS).

Belongs to the TatA/E family. As to quaternary structure, the Tat system comprises two distinct complexes: a TatABC complex, containing multiple copies of TatA, TatB and TatC subunits, and a separate TatA complex, containing only TatA subunits. Substrates initially bind to the TatABC complex, which probably triggers association of the separate TatA complex to form the active translocon.

The protein resides in the cell inner membrane. In terms of biological role, part of the twin-arginine translocation (Tat) system that transports large folded proteins containing a characteristic twin-arginine motif in their signal peptide across membranes. TatA could form the protein-conducting channel of the Tat system. This Variovorax paradoxus (strain S110) protein is Sec-independent protein translocase protein TatA.